The primary structure comprises 282 residues: Shikimate kinase (282 aa).

ATP is bound at residue 86 to 96 (PIKSGLSSSSA).

The protein belongs to the GHMP kinase family. Archaeal shikimate kinase subfamily.

It is found in the cytoplasm. The enzyme catalyses shikimate + ATP = 3-phosphoshikimate + ADP + H(+). Its pathway is metabolic intermediate biosynthesis; chorismate biosynthesis; chorismate from D-erythrose 4-phosphate and phosphoenolpyruvate: step 5/7. This chain is Shikimate kinase (aroK), found in Methanocaldococcus jannaschii (strain ATCC 43067 / DSM 2661 / JAL-1 / JCM 10045 / NBRC 100440) (Methanococcus jannaschii).